The chain runs to 89 residues: Small ribosomal subunit protein bS20 (89 aa).

The protein belongs to the bacterial ribosomal protein bS20 family.

Its function is as follows. Binds directly to 16S ribosomal RNA. The protein is Small ribosomal subunit protein bS20 of Xanthobacter autotrophicus (strain ATCC BAA-1158 / Py2).